Here is a 361-residue protein sequence, read N- to C-terminus: Phospho-N-acetylmuramoyl-pentapeptide-transferase (361 aa).

The next 10 membrane-spanning stretches (helical) occupy residues 28–48 (LAIIITLSLSFVTGPILIKFL), 74–94 (TMGGIMIILSSCLATLLLADL), 99–119 (IWITLFGFISFGIIGFMDDYA), 133–153 (SKLLLQGIISLIICILLEYTD), 168–188 (LSLDLGYFYIVFAIFVIVGSS), 203–223 (VPIAFTAGSFALISYLVGNLI), 236–256 (TGELTVLCAGLVGSCLGFLWF), 263–283 (VFMGDTGSLSLGSILGIISVI), 288–308 (VVLSIVGGLFVVETTSVILQV), and 338–358 (KVVIRFWIISVIFALIGLSSL).

It belongs to the glycosyltransferase 4 family. MraY subfamily. The cofactor is Mg(2+).

The protein resides in the cell inner membrane. It catalyses the reaction UDP-N-acetyl-alpha-D-muramoyl-L-alanyl-gamma-D-glutamyl-meso-2,6-diaminopimeloyl-D-alanyl-D-alanine + di-trans,octa-cis-undecaprenyl phosphate = di-trans,octa-cis-undecaprenyl diphospho-N-acetyl-alpha-D-muramoyl-L-alanyl-D-glutamyl-meso-2,6-diaminopimeloyl-D-alanyl-D-alanine + UMP. The protein operates within cell wall biogenesis; peptidoglycan biosynthesis. Its function is as follows. Catalyzes the initial step of the lipid cycle reactions in the biosynthesis of the cell wall peptidoglycan: transfers peptidoglycan precursor phospho-MurNAc-pentapeptide from UDP-MurNAc-pentapeptide onto the lipid carrier undecaprenyl phosphate, yielding undecaprenyl-pyrophosphoryl-MurNAc-pentapeptide, known as lipid I. This chain is Phospho-N-acetylmuramoyl-pentapeptide-transferase, found in Rickettsia canadensis (strain McKiel).